A 256-amino-acid chain; its full sequence is 1-(5-phosphoribosyl)-5-[(5-phosphoribosylamino)methylideneamino] imidazole-4-carboxamide isomerase (256 aa).

Catalysis depends on Asp8, which acts as the Proton acceptor. Residue Asp129 is the Proton donor of the active site.

Belongs to the HisA/HisF family.

The protein localises to the cytoplasm. The enzyme catalyses 1-(5-phospho-beta-D-ribosyl)-5-[(5-phospho-beta-D-ribosylamino)methylideneamino]imidazole-4-carboxamide = 5-[(5-phospho-1-deoxy-D-ribulos-1-ylimino)methylamino]-1-(5-phospho-beta-D-ribosyl)imidazole-4-carboxamide. Its pathway is amino-acid biosynthesis; L-histidine biosynthesis; L-histidine from 5-phospho-alpha-D-ribose 1-diphosphate: step 4/9. The polypeptide is 1-(5-phosphoribosyl)-5-[(5-phosphoribosylamino)methylideneamino] imidazole-4-carboxamide isomerase (Synechococcus sp. (strain CC9311)).